We begin with the raw amino-acid sequence, 170 residues long: Shikimate kinase (170 aa).

11–16 (LSGKST) is a binding site for ATP. Residue serine 15 participates in Mg(2+) binding. Residues aspartate 33, arginine 57, and glycine 79 each contribute to the substrate site. Arginine 119 contacts ATP. Arginine 137 provides a ligand contact to substrate.

This sequence belongs to the shikimate kinase family. As to quaternary structure, monomer. Mg(2+) serves as cofactor.

The protein resides in the cytoplasm. It carries out the reaction shikimate + ATP = 3-phosphoshikimate + ADP + H(+). Its pathway is metabolic intermediate biosynthesis; chorismate biosynthesis; chorismate from D-erythrose 4-phosphate and phosphoenolpyruvate: step 5/7. Its function is as follows. Catalyzes the specific phosphorylation of the 3-hydroxyl group of shikimic acid using ATP as a cosubstrate. The chain is Shikimate kinase from Clostridium botulinum (strain Okra / Type B1).